The primary structure comprises 217 residues: ATP phosphoribosyltransferase (217 aa).

Belongs to the ATP phosphoribosyltransferase family. Short subfamily. Heteromultimer composed of HisG and HisZ subunits.

The protein localises to the cytoplasm. The catalysed reaction is 1-(5-phospho-beta-D-ribosyl)-ATP + diphosphate = 5-phospho-alpha-D-ribose 1-diphosphate + ATP. It participates in amino-acid biosynthesis; L-histidine biosynthesis; L-histidine from 5-phospho-alpha-D-ribose 1-diphosphate: step 1/9. In terms of biological role, catalyzes the condensation of ATP and 5-phosphoribose 1-diphosphate to form N'-(5'-phosphoribosyl)-ATP (PR-ATP). Has a crucial role in the pathway because the rate of histidine biosynthesis seems to be controlled primarily by regulation of HisG enzymatic activity. This Parasynechococcus marenigrum (strain WH8102) protein is ATP phosphoribosyltransferase.